A 140-amino-acid chain; its full sequence is MSVEIPAEWKKFRYRGKSLEELLNMPMDDFIKLLPARQRRSLRKGFTPSERTLIEKIRKIRRDSKADKPIKTHVRSLVILPEMVGLKFAVYNGKQFVEFQVVPEMIGHYLGEFSIPIQKVEHGEPGLKATRSSLFMAMKG.

It belongs to the universal ribosomal protein uS19 family.

Protein S19 forms a complex with S13 that binds strongly to the 16S ribosomal RNA. The sequence is that of Small ribosomal subunit protein uS19 from Metallosphaera sedula (strain ATCC 51363 / DSM 5348 / JCM 9185 / NBRC 15509 / TH2).